We begin with the raw amino-acid sequence, 670 residues long: Oxidoreductase PigB (670 aa).

The N-terminal stretch at 1 to 19 is a signal peptide; the sequence is MIIQRLFGILYMLAGLAKA. The next 4 helical transmembrane spans lie at 53 to 73, 76 to 96, 98 to 118, and 238 to 258; these read GDVI…ILML, LWTT…VVIL, QSQP…LYML, and LVFF…VGFI.

The protein belongs to the flavin monoamine oxidase family. Requires FAD as cofactor.

The protein resides in the membrane. It functions in the pathway antibiotic biosynthesis; prodigiosin biosynthesis. Its function is as follows. Involved in the biosynthesis of 2-methyl-3-n-amyl-pyrrole (MAP), one of the terminal products involved in the biosynthesis of the red antibiotic prodigiosin (Pig). Catalyzes the oxidation of dihydro form of MAP (H2MAP) to yield MAP. The polypeptide is Oxidoreductase PigB (Serratia sp. (strain ATCC 39006) (Prodigiosinella confusarubida)).